The sequence spans 377 residues: UPF0754 membrane protein lin2327 (377 aa).

2 helical membrane passes run 1–21 and 357–377; these read MSVL…GAMT and YLGG…AMWI.

It belongs to the UPF0754 family.

Its subcellular location is the cell membrane. The sequence is that of UPF0754 membrane protein lin2327 from Listeria innocua serovar 6a (strain ATCC BAA-680 / CLIP 11262).